A 220-amino-acid chain; its full sequence is Large ribosomal subunit protein eL15 (220 aa).

Residues 197–207 (KKRHEASRGAR) are compositionally biased toward basic and acidic residues. Residues 197-220 (KKRHEASRGARDPWQIAEKLKEEK) are disordered.

This sequence belongs to the eukaryotic ribosomal protein eL15 family.

This Desulfurococcus amylolyticus (strain DSM 18924 / JCM 16383 / VKM B-2413 / 1221n) (Desulfurococcus kamchatkensis) protein is Large ribosomal subunit protein eL15.